A 142-amino-acid polypeptide reads, in one-letter code: Large ribosomal subunit protein uL13c (142 aa).

It belongs to the universal ribosomal protein uL13 family. As to quaternary structure, part of the 50S ribosomal subunit.

It is found in the plastid. It localises to the chloroplast. In Porphyra purpurea (Red seaweed), this protein is Large ribosomal subunit protein uL13c.